Reading from the N-terminus, the 760-residue chain is DEAD-box ATP-dependent RNA helicase 24 (760 aa).

2 disordered regions span residues 1-76 and 90-113; these read MSNR…GEVD and QEMK…DDDD. Residues 14 to 27 show a composition bias toward polar residues; the sequence is NRQTSYSFERSQAP. The span at 41–64 shows a compositional bias: acidic residues; sequence NSEDADLDNIDYMENEEAEEDIEE. The segment covering 99 to 109 has biased composition (basic and acidic residues); the sequence is KPKEKLERYKD. Residue Ser160 is modified to Phosphoserine. The Q motif motif lies at 228–256; the sequence is KTFEDCGFSSQIMSAIKKQAYEKPTAIQC. One can recognise a Helicase ATP-binding domain in the interval 259 to 434; sequence LPIVLSGRDV…REILSDPIRV (176 aa). Residue 272 to 279 coordinates ATP; sequence AKTGSGKT. The DEAD box motif lies at 382–385; it reads DEAD. In terms of domain architecture, Helicase C-terminal spans 459–608; it reads KLPWLLEKLP…NVPPELTDLA (150 aa). Disordered stretches follow at residues 604-638, 647-666, and 706-760; these read LTDL…KGVR, GFSS…SRSG, and FVSG…GWDN. A compositionally biased stretch (basic residues) spans 615–628; sequence KSKRDGRKGGKKGR. Gly residues predominate over residues 629–638; sequence GGGGGNKGVR. Over residues 649–666 the composition is skewed to polar residues; sequence SSESSRTPSSKAAPSRSG. A compositionally biased stretch (gly residues) spans 707–716; it reads VSGGTIGGDM. The segment covering 718-732 has biased composition (polar residues); it reads RTQSQAPPVAPTQNA. Residues 733 to 745 show a composition bias toward low complexity; sequence SSHNSSQNHSQSS. Residues 750–760 show a composition bias toward basic residues; that stretch reads RERKRRSGWDN.

This sequence belongs to the DEAD box helicase family.

It catalyses the reaction ATP + H2O = ADP + phosphate + H(+). The protein is DEAD-box ATP-dependent RNA helicase 24 (RH24) of Arabidopsis thaliana (Mouse-ear cress).